We begin with the raw amino-acid sequence, 160 residues long: Class B acid phosphatase (160 aa).

The N-terminal stretch at 1–23 (MRKVTLTLSAIALALSLNGAAMA) is a signal peptide. Catalysis depends on aspartate 69, which acts as the Nucleophile. Residues aspartate 69 and aspartate 71 each contribute to the Mg(2+) site. The active-site Proton donor is the aspartate 71. Position 137-138 (137-138 (TG)) interacts with substrate.

This sequence belongs to the class B bacterial acid phosphatase family. As to quaternary structure, homotetramer. Mg(2+) serves as cofactor.

It localises to the periplasm. It catalyses the reaction a phosphate monoester + H2O = an alcohol + phosphate. Functionally, dephosphorylates several organic phosphate monoesters. Also has a phosphotransferase activity catalyzing the transfer of low-energy phosphate groups from organic phosphate monoesters to free hydroxyl groups of various organic compounds. This is Class B acid phosphatase (aphA) from Proteus mirabilis.